The primary structure comprises 144 residues: Putative sugar phosphate isomerase RT0290 (144 aa).

His12 contributes to the substrate binding site. The Proton donor role is filled by His101. Arg135 provides a ligand contact to substrate.

It belongs to the LacAB/RpiB family.

The chain is Putative sugar phosphate isomerase RT0290 from Rickettsia typhi (strain ATCC VR-144 / Wilmington).